Consider the following 148-residue polypeptide: Large ribosomal subunit protein bL9 (148 aa).

Belongs to the bacterial ribosomal protein bL9 family.

In terms of biological role, binds to the 23S rRNA. The chain is Large ribosomal subunit protein bL9 from Thermus thermophilus (strain ATCC BAA-163 / DSM 7039 / HB27).